Consider the following 348-residue polypeptide: Quinolinate synthase (348 aa).

Iminosuccinate-binding residues include His47 and Ser68. Cys113 is a [4Fe-4S] cluster binding site. Residues Tyr139 to Asn141 and Ser156 contribute to the iminosuccinate site. Residue Cys200 coordinates [4Fe-4S] cluster. Iminosuccinate contacts are provided by residues His226–Glu228 and Thr243. Cys297 contributes to the [4Fe-4S] cluster binding site.

Belongs to the quinolinate synthase family. Type 1 subfamily. [4Fe-4S] cluster serves as cofactor.

It localises to the cytoplasm. The catalysed reaction is iminosuccinate + dihydroxyacetone phosphate = quinolinate + phosphate + 2 H2O + H(+). It functions in the pathway cofactor biosynthesis; NAD(+) biosynthesis; quinolinate from iminoaspartate: step 1/1. Catalyzes the condensation of iminoaspartate with dihydroxyacetone phosphate to form quinolinate. The polypeptide is Quinolinate synthase (Sodalis glossinidius (strain morsitans)).